The primary structure comprises 131 residues: D-ribose pyranase (131 aa).

The active-site Proton donor is the His-20. Residues Asp-28, His-98, and 120-122 (YAN) contribute to the substrate site.

It belongs to the RbsD / FucU family. RbsD subfamily. As to quaternary structure, homodecamer.

It localises to the cytoplasm. The catalysed reaction is beta-D-ribopyranose = beta-D-ribofuranose. It participates in carbohydrate metabolism; D-ribose degradation; D-ribose 5-phosphate from beta-D-ribopyranose: step 1/2. Catalyzes the interconversion of beta-pyran and beta-furan forms of D-ribose. This Bacillus cereus (strain ATCC 14579 / DSM 31 / CCUG 7414 / JCM 2152 / NBRC 15305 / NCIMB 9373 / NCTC 2599 / NRRL B-3711) protein is D-ribose pyranase.